Reading from the N-terminus, the 208-residue chain is V-type ATP synthase subunit D (208 aa).

It belongs to the V-ATPase D subunit family.

Functionally, produces ATP from ADP in the presence of a proton gradient across the membrane. The protein is V-type ATP synthase subunit D of Streptococcus pyogenes serotype M3 (strain ATCC BAA-595 / MGAS315).